We begin with the raw amino-acid sequence, 412 residues long: Multifunctional CCA protein (412 aa).

ATP is bound by residues glycine 8 and arginine 11. 2 residues coordinate CTP: glycine 8 and arginine 11. Mg(2+) contacts are provided by aspartate 21 and aspartate 23. ATP is bound by residues arginine 91, arginine 137, and arginine 140. CTP-binding residues include arginine 91, arginine 137, and arginine 140. One can recognise an HD domain in the interval 228–329; sequence TGIHTMMVLE…VKLFDKADFW (102 aa).

This sequence belongs to the tRNA nucleotidyltransferase/poly(A) polymerase family. Bacterial CCA-adding enzyme type 1 subfamily. As to quaternary structure, monomer. Can also form homodimers and oligomers. It depends on Mg(2+) as a cofactor. The cofactor is Ni(2+).

It carries out the reaction a tRNA precursor + 2 CTP + ATP = a tRNA with a 3' CCA end + 3 diphosphate. The enzyme catalyses a tRNA with a 3' CCA end + 2 CTP + ATP = a tRNA with a 3' CCACCA end + 3 diphosphate. Its function is as follows. Catalyzes the addition and repair of the essential 3'-terminal CCA sequence in tRNAs without using a nucleic acid template. Adds these three nucleotides in the order of C, C, and A to the tRNA nucleotide-73, using CTP and ATP as substrates and producing inorganic pyrophosphate. tRNA 3'-terminal CCA addition is required both for tRNA processing and repair. Also involved in tRNA surveillance by mediating tandem CCA addition to generate a CCACCA at the 3' terminus of unstable tRNAs. While stable tRNAs receive only 3'-terminal CCA, unstable tRNAs are marked with CCACCA and rapidly degraded. The chain is Multifunctional CCA protein from Shewanella pealeana (strain ATCC 700345 / ANG-SQ1).